Here is a 163-residue protein sequence, read N- to C-terminus: Nucleotide-binding protein Mvan_0997 (163 aa).

It belongs to the YajQ family.

Functionally, nucleotide-binding protein. The sequence is that of Nucleotide-binding protein Mvan_0997 from Mycolicibacterium vanbaalenii (strain DSM 7251 / JCM 13017 / BCRC 16820 / KCTC 9966 / NRRL B-24157 / PYR-1) (Mycobacterium vanbaalenii).